The primary structure comprises 381 residues: Sterol 24-C-methyltransferase ERG6A (381 aa).

Belongs to the class I-like SAM-binding methyltransferase superfamily. Erg6/SMT family.

It carries out the reaction lanosterol + S-adenosyl-L-methionine = eburicol + S-adenosyl-L-homocysteine + H(+). The protein operates within steroid metabolism; ergosterol biosynthesis. In terms of biological role, sterol 24-C-methyltransferase; part of the third module of ergosterol biosynthesis pathway that includes the late steps of the pathway. ERG6A and ERG6B methylate lanosterol at C-24 to produce eburicol. The third module or late pathway involves the ergosterol synthesis itself through consecutive reactions that mainly occur in the endoplasmic reticulum (ER) membrane. Firstly, the squalene synthase ERG9 catalyzes the condensation of 2 farnesyl pyrophosphate moieties to form squalene, which is the precursor of all steroids. Squalene synthase is crucial for balancing the incorporation of farnesyl diphosphate (FPP) into sterol and nonsterol isoprene synthesis. Secondly, squalene is converted into lanosterol by the consecutive action of the squalene epoxidase ERG1 and the lanosterol synthase ERG7. Then, the delta(24)-sterol C-methyltransferase ERG6 methylates lanosterol at C-24 to produce eburicol. Eburicol is the substrate of the sterol 14-alpha demethylase encoded by CYP51A, CYP51B and CYP51C, to yield 4,4,24-trimethyl ergosta-8,14,24(28)-trienol. CYP51B encodes the enzyme primarily responsible for sterol 14-alpha-demethylation, and plays an essential role in ascospore formation. CYP51A encodes an additional sterol 14-alpha-demethylase, induced on ergosterol depletion and responsible for the intrinsic variation in azole sensitivity. The third CYP51 isoform, CYP51C, does not encode a sterol 14-alpha-demethylase, but is required for full virulence on host wheat ears. The C-14 reductase ERG24 then reduces the C14=C15 double bond which leads to 4,4-dimethylfecosterol. A sequence of further demethylations at C-4, involving the C-4 demethylation complex containing the C-4 methylsterol oxidases ERG25, the sterol-4-alpha-carboxylate 3-dehydrogenase ERG26 and the 3-keto-steroid reductase ERG27, leads to the production of fecosterol via 4-methylfecosterol. ERG28 has a role as a scaffold to help anchor ERG25, ERG26 and ERG27 to the endoplasmic reticulum. The C-8 sterol isomerase ERG2 then catalyzes the reaction which results in unsaturation at C-7 in the B ring of sterols and thus converts fecosterol to episterol. The sterol-C5-desaturases ERG3A and ERG3BB then catalyze the introduction of a C-5 double bond in the B ring to produce 5-dehydroepisterol. The C-22 sterol desaturases ERG5A and ERG5B further convert 5-dehydroepisterol into ergosta-5,7,22,24(28)-tetraen-3beta-ol by forming the C-22(23) double bond in the sterol side chain. Finally, ergosta-5,7,22,24(28)-tetraen-3beta-ol is substrate of the C-24(28) sterol reductase ERG4 to produce ergosterol. The sequence is that of Sterol 24-C-methyltransferase ERG6A (FG02783.1) from Gibberella zeae (strain ATCC MYA-4620 / CBS 123657 / FGSC 9075 / NRRL 31084 / PH-1) (Wheat head blight fungus).